The chain runs to 353 residues: Ferredoxin--NADP reductase (353 aa).

The FAD site is built by T25, E44, Q52, Y57, V97, F132, D298, and S339.

Belongs to the ferredoxin--NADP reductase type 2 family. In terms of assembly, homodimer. FAD serves as cofactor.

The enzyme catalyses 2 reduced [2Fe-2S]-[ferredoxin] + NADP(+) + H(+) = 2 oxidized [2Fe-2S]-[ferredoxin] + NADPH. This chain is Ferredoxin--NADP reductase, found in Chlorobium phaeovibrioides (strain DSM 265 / 1930) (Prosthecochloris vibrioformis (strain DSM 265)).